The sequence spans 458 residues: Ammonium transporter Rh type B (458 aa).

Topologically, residues 1–13 (MAGSPSRAAGRRL) are cytoplasmic. A helical transmembrane segment spans residues 14–34 (QLPLLCLFLQGATAVLFAVFV). Residues 35–61 (RYNHKTDAALWHRGNYSNADNEFYFRY) lie on the Extracellular side of the membrane. A glycan (N-linked (GlcNAc...) asparagine) is linked at Asn49. A helical transmembrane segment spans residues 62 to 82 (PSFQDVHAMVFVGFGFLMVFL). The Cytoplasmic portion of the chain corresponds to 83–86 (QRYG). A helical transmembrane segment spans residues 87–107 (FSSVGFTFLLAAFALQWSTLV). Residues 108-124 (QGFLHSFHSGHIHVGVE) are Extracellular-facing. A helical membrane pass occupies residues 125–145 (SMINADFCAGAVLISFGAVLG). Over 146 to 149 (KTGP) the chain is Cytoplasmic. A helical membrane pass occupies residues 150–170 (AQLLLMALLEVVLFGINEFVL). Over 171–178 (LHLLGVRD) the chain is Extracellular. The chain crosses the membrane as a helical span at residues 179-201 (AGGSMTIHTFGAYFGLVLSRVLY). Residues 202–219 (RPQLEKSKHRQGSVYHSD) lie on the Cytoplasmic side of the membrane. The chain crosses the membrane as a helical span at residues 220–240 (LFAMIGTIFLWIFWPSFNSAL). Residues 241 to 251 (TALGAGQHRTA) are Extracellular-facing. Residues 252 to 272 (LNTYYSLAASTLGTFALSALV) form a helical membrane-spanning segment. Over 273–282 (GEDGRLDMVH) the chain is Cytoplasmic. The chain crosses the membrane as a helical span at residues 283–303 (IQNAALAGGVVVGTSSEMMLT). A topological domain (extracellular) is located at residue Pro304. A helical membrane pass occupies residues 305–325 (FGALAAGFLAGTVSTLGYKFF). Over 326 to 346 (TPILESKFKVQDTCGVHNLHG) the chain is Cytoplasmic. The chain crosses the membrane as a helical span at residues 347 to 367 (MPGVLGALLGVLVAGLATHEA). Residues 368 to 393 (YGDGLESVFPLIAEGQRSATSQAMLQ) are Extracellular-facing. The helical transmembrane segment at 394 to 414 (LFGLFVTLMFASVGGGLGGLL) threads the bilayer. Residues 415–458 (LKLPFLDSPPDSQCYEDQVHWQVPGEHEDEAQRPLRVEEADTQA) are Cytoplasmic-facing. The interaction with ANK3 stretch occupies residues 416 to 424 (KLPFLDSPP). The short motif at 429–432 (YEDQ) is the Basolateral sorting signal element. The interval 439–458 (GEHEDEAQRPLRVEEADTQA) is disordered. Residues 444-458 (EAQRPLRVEEADTQA) are compositionally biased toward basic and acidic residues.

It belongs to the ammonium transporter (TC 2.A.49) family. Rh subfamily. As to quaternary structure, interacts (via C-terminus) with ANK2 and ANK3; required for targeting to the basolateral membrane. Post-translationally, N-glycosylated.

It is found in the cell membrane. The protein localises to the basolateral cell membrane. It carries out the reaction NH4(+)(in) = NH4(+)(out). The catalysed reaction is methylamine(out) = methylamine(in). It catalyses the reaction CO2(out) = CO2(in). Ammonium transporter involved in the maintenance of acid-base homeostasis. Transports ammonium and its related derivative methylammonium across the basolateral plasma membrane of epithelial cells likely contributing to renal transepithelial ammonia transport and ammonia metabolism. May transport either NH4(+) or NH3 ammonia species predominantly mediating an electrogenic NH4(+) transport. May act as a CO2 channel providing for renal acid secretion. This chain is Ammonium transporter Rh type B (RHBG), found in Papio hamadryas (Hamadryas baboon).